We begin with the raw amino-acid sequence, 124 residues long: Hemoglobin subunit alpha (124 aa).

The 124-residue stretch at 1–124 (PLSAADKTII…VAKALSSHYR (124 aa)) folds into the Globin domain. H57 provides a ligand contact to O2. Heme b is bound at residue H79.

The protein belongs to the globin family. As to quaternary structure, hb 1 is a heterotetramer of two alpha and two beta-1 chains. Hb 2 is a heterotetramer of two alpha and two beta-2 chains. Hb 3 is a heterotetramer of two alpha and two beta-3 chains. As to expression, red blood cells (at protein level).

Functionally, involved in oxygen transport from gills to the various peripheral tissues. The protein is Hemoglobin subunit alpha of Somniosus microcephalus (Greenland sleeper shark).